We begin with the raw amino-acid sequence, 205 residues long: Ribosomal RNA small subunit methyltransferase G (205 aa).

S-adenosyl-L-methionine-binding positions include glycine 66, phenylalanine 71, 119–120 (IE), and arginine 135.

It belongs to the methyltransferase superfamily. RNA methyltransferase RsmG family.

The protein resides in the cytoplasm. It catalyses the reaction guanosine(527) in 16S rRNA + S-adenosyl-L-methionine = N(7)-methylguanosine(527) in 16S rRNA + S-adenosyl-L-homocysteine. In terms of biological role, specifically methylates the N7 position of guanine in position 527 of 16S rRNA. The polypeptide is Ribosomal RNA small subunit methyltransferase G (Rhizobium johnstonii (strain DSM 114642 / LMG 32736 / 3841) (Rhizobium leguminosarum bv. viciae)).